The primary structure comprises 706 residues: Elongation factor G 1 (706 aa).

One can recognise a tr-type G domain in the interval 8–290 (NRYRNIGICA…AVIDYLPAPT (283 aa)). GTP is bound by residues 17–24 (AHVDAGKT), 88–92 (DTPGH), and 142–145 (NKMD).

This sequence belongs to the TRAFAC class translation factor GTPase superfamily. Classic translation factor GTPase family. EF-G/EF-2 subfamily.

The protein resides in the cytoplasm. Catalyzes the GTP-dependent ribosomal translocation step during translation elongation. During this step, the ribosome changes from the pre-translocational (PRE) to the post-translocational (POST) state as the newly formed A-site-bound peptidyl-tRNA and P-site-bound deacylated tRNA move to the P and E sites, respectively. Catalyzes the coordinated movement of the two tRNA molecules, the mRNA and conformational changes in the ribosome. This is Elongation factor G 1 from Pseudomonas aeruginosa (strain ATCC 15692 / DSM 22644 / CIP 104116 / JCM 14847 / LMG 12228 / 1C / PRS 101 / PAO1).